The chain runs to 408 residues: Multidrug resistance protein MdtG (408 aa).

11 helical membrane passes run 16-36 (LIVA…VMPF), 58-78 (IVFS…GGLA), 92-112 (LGMG…QFLI), 115-135 (ALLG…ATQV), 146-166 (TLST…GLLA), 173-193 (PVFF…LFCI), 224-244 (LFVT…ILTL), 256-276 (VAFI…LSAP), 290-310 (ILIT…YVQT), 319-339 (FLLG…LVYN), and 378-398 (AVFL…WNSL).

Belongs to the major facilitator superfamily. DHA1 family. MdtG (TC 2.A.1.2.20) subfamily.

The protein resides in the cell inner membrane. In terms of biological role, confers resistance to fosfomycin and deoxycholate. The sequence is that of Multidrug resistance protein MdtG from Escherichia coli O127:H6 (strain E2348/69 / EPEC).